The sequence spans 489 residues: MIKLFNTLSKRVEVFKPIDDVVKIYCCGVTVYDLCHLGHARSYIVWDILRRFLIYSDFKVKYVQNFTDIDDKILKRAKEESSSMKEVSEKNIIEFHKDMDSLGIMRPDSMPKATNHICNICSFITILEDKGYAYSRDGDVYYSVFKNKNYGKLSNQNIQEQNINQQGRMANDENSKKLNPQDFALWKKAKDDEPFFDSPWGKGRPGWHIECSAMVKDELGDTIDIHLGGSDLIFPHHENEIAQSEAANGKKLANYWLHNGMVNVNGQKMSKSLKNFTTIRELIKSGISPMSLRYFVMTVNYRKPLDFTEEALRSASEAWKNINIALSFMDLTKGAFRYIDKNESIEEEYKEKISFELSQKKLKFSEALGNDLNTAGAIAIIYDLAKPLKNFLNQFQRVEGFKIDLNEKFFLIENFKTLEKLTKVLGLEKEVLVKESKITEEEISSLINERLKAKKGKNYAKADEIRNLLNEKGIELIDQSKEITTWIRL.

C27 serves as a coordination point for Zn(2+). The 'HIGH' region motif lies at 29 to 39; the sequence is VTVYDLCHLGH. The Zn(2+) site is built by C211, H236, and E240. Positions 268-272 match the 'KMSKS' region motif; that stretch reads KMSKS. K271 lines the ATP pocket.

Belongs to the class-I aminoacyl-tRNA synthetase family. As to quaternary structure, monomer. Zn(2+) serves as cofactor.

Its subcellular location is the cytoplasm. The catalysed reaction is tRNA(Cys) + L-cysteine + ATP = L-cysteinyl-tRNA(Cys) + AMP + diphosphate. In Prochlorococcus marinus (strain MIT 9215), this protein is Cysteine--tRNA ligase.